Consider the following 243-residue polypeptide: Pyridoxine 5'-phosphate synthase (243 aa).

Asparagine 9 serves as a coordination point for 3-amino-2-oxopropyl phosphate. 11–12 (DH) is a binding site for 1-deoxy-D-xylulose 5-phosphate. Residue arginine 20 coordinates 3-amino-2-oxopropyl phosphate. The active-site Proton acceptor is histidine 45. 1-deoxy-D-xylulose 5-phosphate-binding residues include arginine 47 and histidine 52. The Proton acceptor role is filled by glutamate 72. Threonine 102 contacts 1-deoxy-D-xylulose 5-phosphate. Histidine 193 functions as the Proton donor in the catalytic mechanism. Residues glycine 194 and 215–216 (GH) contribute to the 3-amino-2-oxopropyl phosphate site.

The protein belongs to the PNP synthase family. As to quaternary structure, homooctamer; tetramer of dimers.

It is found in the cytoplasm. It catalyses the reaction 3-amino-2-oxopropyl phosphate + 1-deoxy-D-xylulose 5-phosphate = pyridoxine 5'-phosphate + phosphate + 2 H2O + H(+). It participates in cofactor biosynthesis; pyridoxine 5'-phosphate biosynthesis; pyridoxine 5'-phosphate from D-erythrose 4-phosphate: step 5/5. Catalyzes the complicated ring closure reaction between the two acyclic compounds 1-deoxy-D-xylulose-5-phosphate (DXP) and 3-amino-2-oxopropyl phosphate (1-amino-acetone-3-phosphate or AAP) to form pyridoxine 5'-phosphate (PNP) and inorganic phosphate. The protein is Pyridoxine 5'-phosphate synthase of Yersinia pseudotuberculosis serotype I (strain IP32953).